The primary structure comprises 333 residues: DNA-directed RNA polymerase subunit alpha (333 aa).

The segment at 1–251 (MEKLTKIKHR…AHFQTIGDLT (251 aa)) is alpha N-terminal domain (alpha-NTD). Residues 272 to 333 (DMEIRLLNLS…KLNEYGKLKN (62 aa)) form an alpha C-terminal domain (alpha-CTD) region.

This sequence belongs to the RNA polymerase alpha chain family. As to quaternary structure, homodimer. The RNAP catalytic core consists of 2 alpha, 1 beta, 1 beta' and 1 omega subunit. When a sigma factor is associated with the core the holoenzyme is formed, which can initiate transcription.

It catalyses the reaction RNA(n) + a ribonucleoside 5'-triphosphate = RNA(n+1) + diphosphate. In terms of biological role, DNA-dependent RNA polymerase catalyzes the transcription of DNA into RNA using the four ribonucleoside triphosphates as substrates. This chain is DNA-directed RNA polymerase subunit alpha, found in Mycoplasmopsis synoviae (strain 53) (Mycoplasma synoviae).